The sequence spans 166 residues: 3-isopropylmalate dehydratase small subunit (166 aa).

Belongs to the LeuD family. LeuD type 2 subfamily. As to quaternary structure, heterodimer of LeuC and LeuD.

It carries out the reaction (2R,3S)-3-isopropylmalate = (2S)-2-isopropylmalate. Its pathway is amino-acid biosynthesis; L-leucine biosynthesis; L-leucine from 3-methyl-2-oxobutanoate: step 2/4. Its function is as follows. Catalyzes the isomerization between 2-isopropylmalate and 3-isopropylmalate, via the formation of 2-isopropylmaleate. In Nautilia profundicola (strain ATCC BAA-1463 / DSM 18972 / AmH), this protein is 3-isopropylmalate dehydratase small subunit.